We begin with the raw amino-acid sequence, 745 residues long: MESNNGIILRVAEANSTDPGMSRVRLDESSRRLLDAEIGDVVEIEKVRKTVGRVYRARPEDENKGIVRIDSVMRNNCGASIGDKVKVRKVRTEIAKKVTLAPIIRKDQRLKFGEGIEEYVQRALIRRPMLEQDNISVPGLTLAGQTGLLFKVVKTLPSKVPVEIGEETKIEIREEPASEVLEEVSRISYEDIGGLSEQLGKIREMIELPLKHPELFERLGITPPKGVILYGPPGTGKTLIARAVANESGANFLSINGPEIMSKYYGQSEQKLREIFSKAEETAPSIIFIDEIDSIAPKREEVQGEVERRVVAQLLTLMDGMKERGHVIVIGATNRIDAIDPALRRPGRFDREIEIGVPDRNGRKEILMIHTRNMPLGMSEEEKNKFLEEMADYTYGFVGADLAALVRESAMNALRRYLPEIDLDKPIPTEILEKMVVTEDDFKNALKSIEPSSLREVMVEVPNVHWDDIGGLEDVKREIKETVELPLLKPDVFKRLGIRPSKGFLLYGPPGVGKTLLAKAVATESNANFISIKGPEVLSKWVGESEKAIREIFKKAKQVAPAIVFLDEIDSIAPRRGTTSDSGVTERIVNQLLTSLDGIEVMNGVVVIGATNRPDIMDPALLRAGRFDKLIYIPPPDKEARLSILKVHTKNMPLAPDVDLNDIAQRTEGYVGADLENLCREAGMNAYRENPDATSVSQKNFLDALKTIRPSVDEEVIKFYRTLSETMSKSVSERRKQLQDQGLYL.

ATP is bound by residues 231–238 and 508–515; these read GPPGTGKT and GPPGVGKT.

This sequence belongs to the AAA ATPase family. CDC48 subfamily. As to quaternary structure, homohexamer. Forms a ring-shaped particle.

In Thermoplasma acidophilum (strain ATCC 25905 / DSM 1728 / JCM 9062 / NBRC 15155 / AMRC-C165), this protein is VCP-like ATPase (vat).